Consider the following 688-residue polypeptide: Polyphosphate kinase (688 aa).

N45 is an ATP binding site. Mg(2+) contacts are provided by R375 and R405. The region spanning 430–464 (PGLKIHAKLFLISRKEGDDVVRYAHIGTGNFNEKT) is the PLD phosphodiesterase domain. H435 functions as the Phosphohistidine intermediate in the catalytic mechanism. 3 residues coordinate ATP: Y468, R564, and H592.

The protein belongs to the polyphosphate kinase 1 (PPK1) family. The cofactor is Mg(2+). In terms of processing, an intermediate of this reaction is the autophosphorylated ppk in which a phosphate is covalently linked to a histidine residue through a N-P bond.

It catalyses the reaction [phosphate](n) + ATP = [phosphate](n+1) + ADP. Functionally, catalyzes the reversible transfer of the terminal phosphate of ATP to form a long-chain polyphosphate (polyP). This Salmonella typhimurium (strain LT2 / SGSC1412 / ATCC 700720) protein is Polyphosphate kinase.